Consider the following 184-residue polypeptide: MNRTAYTVGALLLLLGTLLPTAEGKKKGSQGAIPPPDKAQHNDSEQTQSPPQPGSRTRGRGQGRGTAMPGEEVLESSQEALHVTERKYLKRDWCKTQPLKQTIHEEGCNSRTIINRFCYGQCNSFYIPRHIRKEEGSFQSCSFCKPKKFTTMMVTLNCPELQPPTKKKRVTRVKQCRCISIDLD.

An N-terminal signal peptide occupies residues 1–24 (MNRTAYTVGALLLLLGTLLPTAEG). The tract at residues 23-77 (EGKKKGSQGAIPPPDKAQHNDSEQTQSPPQPGSRTRGRGQGRGTAMPGEEVLESS) is disordered. Asn42 is a glycosylation site (N-linked (GlcNAc...) asparagine). 4 disulfides stabilise this stretch: Cys94–Cys144, Cys108–Cys158, Cys118–Cys176, and Cys122–Cys178. Residues 94-184 (CKTQPLKQTI…QCRCISIDLD (91 aa)) enclose the CTCK domain.

This sequence belongs to the DAN family. As to quaternary structure, homodimer; can also form homooligomers. Interacts with BMP2; can form higher oligomers with BMP2. Interacts with SLIT1 and SLIT2 in a glycosylation-dependent manner. Highly expressed in spleen and to a lesser extent in lung, skeletal muscle and kidney. Expressed only in non-transformed cells or primary fibroblasts in culture but not in established transformed or tumor derived cell lines. Broadly expressed in limb bud mesenchyme but restricted to the distal limb bud mesenchyme and concentrated posteriorly. Expressed in ovary especially in granulosa cells of follicles of type 4.

Its subcellular location is the secreted. Cytokine that may play an important role during carcinogenesis and metanephric kidney organogenesis, as BMP a antagonist required for early limb outgrowth and patterning in maintaining the FGF4-SHH feedback loop. Down-regulates the BMP4 signaling in a dose-dependent manner. Antagonist of BMP2; inhibits BMP2-mediated differentiation of osteoblasts (in vitro). Acts as inhibitor of monocyte chemotaxis. This chain is Gremlin-1 (Grem1), found in Mus musculus (Mouse).